The following is a 380-amino-acid chain: Ribosomal RNA large subunit methyltransferase F (380 aa).

Disordered stretches follow at residues 1 to 54 (MSHK…PRNA) and 260 to 279 (SQVMSPQVQPSGKVKPATDK). Residues 21-32 (QRQVVSKSSLQK) are compositionally biased toward low complexity. Residues 44–53 (QKSKALHPRN) show a composition bias toward basic residues. Over residues 260-270 (SQVMSPQVQPS) the composition is skewed to low complexity.

This sequence belongs to the methyltransferase superfamily. METTL16/RlmF family.

Its subcellular location is the cytoplasm. It catalyses the reaction adenosine(1618) in 23S rRNA + S-adenosyl-L-methionine = N(6)-methyladenosine(1618) in 23S rRNA + S-adenosyl-L-homocysteine + H(+). Its function is as follows. Specifically methylates the adenine in position 1618 of 23S rRNA. The protein is Ribosomal RNA large subunit methyltransferase F of Shewanella pealeana (strain ATCC 700345 / ANG-SQ1).